The sequence spans 24 residues: Protein YriA (24 aa).

This is Protein YriA from Escherichia coli (strain K12).